The sequence spans 206 residues: Uridine kinase (206 aa).

11–18 (GGSASGKT) lines the ATP pocket.

The protein belongs to the uridine kinase family.

It is found in the cytoplasm. It carries out the reaction uridine + ATP = UMP + ADP + H(+). It catalyses the reaction cytidine + ATP = CMP + ADP + H(+). It participates in pyrimidine metabolism; CTP biosynthesis via salvage pathway; CTP from cytidine: step 1/3. It functions in the pathway pyrimidine metabolism; UMP biosynthesis via salvage pathway; UMP from uridine: step 1/1. The polypeptide is Uridine kinase (Lactococcus lactis subsp. lactis (strain IL1403) (Streptococcus lactis)).